The following is a 134-amino-acid chain: Acyl carrier protein, chloroplastic (134 aa).

The N-terminal 51 residues, 1–51, are a transit peptide targeting the chloroplast; that stretch reads MSTTFCSSVSMQATSLAATTRISFQKPALVSRTNLSFNLSRSIPTRLSVSC. Residues 55 to 130 enclose the Carrier domain; that stretch reads PETVEKVSKI…EAAELIDELV (76 aa). O-(pantetheine 4'-phosphoryl)serine is present on S90.

Belongs to the acyl carrier protein (ACP) family. Post-translationally, 4'-phosphopantetheine is transferred from CoA to a specific serine of apo-ACP by acpS. This modification is essential for activity because fatty acids are bound in thioester linkage to the sulfhydryl of the prosthetic group. As to expression, seed.

The protein localises to the plastid. It localises to the chloroplast. It functions in the pathway lipid metabolism; fatty acid biosynthesis. In terms of biological role, carrier of the growing fatty acid chain in fatty acid biosynthesis. This is Acyl carrier protein, chloroplastic (ACL1.A1) from Brassica napus (Rape).